The following is a 207-amino-acid chain: MDNEKGLLIVLSGPSGVGKGTVRKRIFEDPSTSYKYSISMTTRQMREGEVDGVDYFFKTRDAFEALIKDDQFIEYAEYVGNYYGTPVQYVKDTMDEGHDVFLEIEVEGAKQVRKKFPDALFIFLAPPSLDHLRERLVGRGTESDEKIQSRINEARKEVEMMNLYDYVVVNDEVELAKNRIQCIVEAEHLKRERVEAKYRKMILEAKK.

One can recognise a Guanylate kinase-like domain in the interval 6–185 (GLLIVLSGPS…AKNRIQCIVE (180 aa)). 13–20 (GPSGVGKG) contacts ATP.

The protein belongs to the guanylate kinase family.

Its subcellular location is the cytoplasm. It carries out the reaction GMP + ATP = GDP + ADP. Functionally, essential for recycling GMP and indirectly, cGMP. The polypeptide is Guanylate kinase (Staphylococcus aureus (strain bovine RF122 / ET3-1)).